Consider the following 865-residue polypeptide: Envelope glycoprotein B (865 aa).

The first 21 residues, M1–S21, serve as a signal peptide directing secretion. Over S22–P731 the chain is Virion surface. N27 is a glycosylation site (N-linked (GlcNAc...) asparagine; by host). Disulfide bonds link C49–C530, C66–C486, C140–C204, C298–C346, and C553–C590. Residues T106–Y112 are involved in fusion and/or binding to host membrane. An N-linked (GlcNAc...) asparagine; by host glycan is attached at N184. Positions G191–T198 are involved in fusion and/or binding to host membrane. N-linked (GlcNAc...) asparagine; by host glycosylation is found at N332, N364, N406, and N425. N631 is a glycosylation site (N-linked (GlcNAc...) asparagine; by host). 2 hydrophobic membrane proximal region regions span residues I676 to S729 and D683 to S729. Residues F732–Y752 form a helical membrane-spanning segment. The Intravirion segment spans residues R753–V865. The Golgi targeting motif lies at Y809–L812. A disordered region spans residues I843–V865. An Internalization motif motif is present at residues Y850–L853.

The protein belongs to the herpesviridae glycoprotein B family. Homotrimer; disulfide-linked. Binds to heparan sulfate proteoglycans. Interacts with gH/gL heterodimer. In terms of processing, a proteolytic cleavage by host furin generates two subunits that remain linked by disulfide bonds.

Its subcellular location is the virion membrane. It is found in the host cell membrane. The protein resides in the host endosome membrane. It localises to the host Golgi apparatus membrane. Its function is as follows. Envelope glycoprotein that forms spikes at the surface of virion envelope. Essential for the initial attachment to heparan sulfate moieties of the host cell surface proteoglycans. Involved in fusion of viral and cellular membranes leading to virus entry into the host cell. Following initial binding to its host receptors, membrane fusion is mediated by the fusion machinery composed at least of gB and the heterodimer gH/gL. May be involved in the fusion between the virion envelope and the outer nuclear membrane during virion egress. The protein is Envelope glycoprotein B of Gallid herpesvirus 2 (strain Chicken/Md5/ATCC VR-987) (GaHV-2).